We begin with the raw amino-acid sequence, 348 residues long: Centromere protein N (348 aa).

The protein belongs to the CENP-N/CHL4 family.

Its subcellular location is the nucleus. It localises to the chromosome. The protein resides in the centromere. Probable component of a centromeric complex involved in assembly of kinetochore proteins, mitotic progression and chromosome segregation. In Xenopus tropicalis (Western clawed frog), this protein is Centromere protein N (cenpn).